The following is a 298-amino-acid chain: MDQKQIEEIVRSVMASMGQDVPQPVAPSTQEGAKPQRAAPTATESCALDLGSAEAKAWIGVENPHRADVLTELRRSTAARVCTGRAGPRPRTQALLRFLADHSRSKDTVLKEVPEEWVKAQGLLEVRSEISDKNRYLTRPDMGRRLSQEAIDALKSQCVMNPDVQVVISDGLSTDAITANYEEILPPLLAGLKQAGLKVGTPFFVRYGRVKIEDQIGELLGAKVVILLVGERPGLGQSESLSCYAVYSPRVTTTVEADRTCISNIHQGGTPPVEAAAVIVDLAKRMLEQKASGINMTR.

The interval 15–43 (ASMGQDVPQPVAPSTQEGAKPQRAAPTAT) is disordered. Adenosylcob(III)alamin is bound by residues Val210, Glu231, and Cys261.

The protein belongs to the EutC family. As to quaternary structure, the basic unit is a heterodimer which dimerizes to form tetramers. The heterotetramers trimerize; 6 large subunits form a core ring with 6 small subunits projecting outwards. Adenosylcob(III)alamin is required as a cofactor.

The protein resides in the bacterial microcompartment. It carries out the reaction ethanolamine = acetaldehyde + NH4(+). Its pathway is amine and polyamine degradation; ethanolamine degradation. Its function is as follows. Catalyzes the deamination of various vicinal amino-alcohols to oxo compounds. Allows this organism to utilize ethanolamine as the sole source of nitrogen and carbon in the presence of external vitamin B12. In Salmonella arizonae (strain ATCC BAA-731 / CDC346-86 / RSK2980), this protein is Ethanolamine ammonia-lyase small subunit.